The sequence spans 134 residues: Profilin-2 (134 aa).

Residues cysteine 13 and cysteine 118 are joined by a disulfide bond. The Involved in PIP2 interaction motif lies at 84-100; sequence AVIRGKKGSGGITIKKT. The residue at position 114 (threonine 114) is a Phosphothreonine.

The protein belongs to the profilin family. Post-translationally, phosphorylated by MAP kinases.

Its subcellular location is the cytoplasm. It is found in the cytoskeleton. The polypeptide is Profilin-2 (Olea europaea (Common olive)).